A 1442-amino-acid polypeptide reads, in one-letter code: DNA polymerase III PolC-type (1442 aa).

In terms of domain architecture, Exonuclease spans 426–582 (YVVFDVETTG…YDTEATAYIF (157 aa)).

This sequence belongs to the DNA polymerase type-C family. PolC subfamily.

It is found in the cytoplasm. It carries out the reaction DNA(n) + a 2'-deoxyribonucleoside 5'-triphosphate = DNA(n+1) + diphosphate. Required for replicative DNA synthesis. This DNA polymerase also exhibits 3' to 5' exonuclease activity. This is DNA polymerase III PolC-type from Staphylococcus epidermidis (strain ATCC 12228 / FDA PCI 1200).